A 118-amino-acid chain; its full sequence is Succinate dehydrogenase assembly factor 4, mitochondrial (118 aa).

A mitochondrion-targeting transit peptide spans 1–30 (MQSVTRQTARVLPQMGKQVSYLSTSGAWRA). The interval 65-118 (GKLDEFSRHPYQEKEPLKPWPNQTNPYTGEIGGPAGPEPTRYGDWERKGRVSDF) is disordered. 2 stretches are compositionally biased toward basic and acidic residues: residues 66–81 (KLDE…KEPL) and 105–118 (RYGD…VSDF).

Belongs to the SDHAF4 family. Interacts with SdhA in its FAD-bound form.

The protein resides in the mitochondrion matrix. Its function is as follows. Plays an essential role in the assembly of succinate dehydrogenase (SDH), an enzyme complex (also referred to as respiratory complex II) that is a component of both the tricarboxylic acid (TCA) cycle and the mitochondrial electron transport chain, and which couples the oxidation of succinate to fumarate with the reduction of ubiquinone (coenzyme Q) to ubiquinol. Binds to the flavoprotein subunit SdhA in its FAD-bound form, blocking the generation of excess reactive oxygen species (ROS) and facilitating its assembly with the iron-sulfur protein subunit SdhB into the SDH catalytic dimer. The chain is Succinate dehydrogenase assembly factor 4, mitochondrial from Drosophila melanogaster (Fruit fly).